The sequence spans 164 residues: Large ribosomal subunit protein uL15 (164 aa).

A compositionally biased stretch (basic residues) spans 1 to 33; sequence MTSKKRRQRGSRTHGGGTHKNRRGAGHRGGRGR. Disordered regions lie at residues 1-59 and 137-164; these read MTSK…PGAE and AGGSATLTEQGKSIAVGEDEEPNSNDEN. Positions 34–43 are enriched in basic and acidic residues; the sequence is AGRDKHEQHN. Over residues 153 to 164 the composition is skewed to acidic residues; it reads GEDEEPNSNDEN.

This sequence belongs to the universal ribosomal protein uL15 family. Part of the 50S ribosomal subunit.

In terms of biological role, binds to the 23S rRNA. This is Large ribosomal subunit protein uL15 from Haloquadratum walsbyi (strain DSM 16790 / HBSQ001).